The chain runs to 599 residues: Aspartate--tRNA ligase (599 aa).

L-aspartate is bound at residue Glu-180. The aspartate stretch occupies residues 204-207; sequence QIFK. Arg-226 lines the L-aspartate pocket. ATP-binding positions include 226–228 and Gln-235; that span reads RDE. L-aspartate is bound at residue His-454. Glu-488 contributes to the ATP binding site. Arg-495 is a binding site for L-aspartate. 540–543 provides a ligand contact to ATP; that stretch reads GLDR.

Belongs to the class-II aminoacyl-tRNA synthetase family. Type 1 subfamily. As to quaternary structure, homodimer.

It is found in the cytoplasm. It catalyses the reaction tRNA(Asp) + L-aspartate + ATP = L-aspartyl-tRNA(Asp) + AMP + diphosphate. Its function is as follows. Catalyzes the attachment of L-aspartate to tRNA(Asp) in a two-step reaction: L-aspartate is first activated by ATP to form Asp-AMP and then transferred to the acceptor end of tRNA(Asp). The polypeptide is Aspartate--tRNA ligase (Clostridium beijerinckii (strain ATCC 51743 / NCIMB 8052) (Clostridium acetobutylicum)).